Here is a 75-residue protein sequence, read N- to C-terminus: SPbeta prophage-derived uncharacterized protein YorX (75 aa).

This is SPbeta prophage-derived uncharacterized protein YorX (yorX) from Bacillus subtilis (strain 168).